The sequence spans 62 residues: Photosystem II reaction center protein Z (62 aa).

A run of 2 helical transmembrane segments spans residues 8-28 (FLIA…VAYA) and 41-61 (YVGS…NFLV).

Belongs to the PsbZ family. PSII is composed of 1 copy each of membrane proteins PsbA, PsbB, PsbC, PsbD, PsbE, PsbF, PsbH, PsbI, PsbJ, PsbK, PsbL, PsbM, PsbT, PsbX, PsbY, PsbZ, Psb30/Ycf12, peripheral proteins PsbO, CyanoQ (PsbQ), PsbU, PsbV and a large number of cofactors. It forms dimeric complexes.

The protein localises to the cellular thylakoid membrane. Its function is as follows. May control the interaction of photosystem II (PSII) cores with the light-harvesting antenna, regulates electron flow through the 2 photosystem reaction centers. PSII is a light-driven water plastoquinone oxidoreductase, using light energy to abstract electrons from H(2)O, generating a proton gradient subsequently used for ATP formation. The sequence is that of Photosystem II reaction center protein Z from Microcystis aeruginosa (strain NIES-843 / IAM M-2473).